The chain runs to 495 residues: UDP-glycosyltransferase 73C11 (495 aa).

H24 (proton acceptor) is an active-site residue. Residue H24 participates in an anthocyanidin binding. The active-site Charge relay is D129. 6 residues coordinate UDP-alpha-D-glucose: Q358, H373, W376, N377, S378, and E381. G396 contacts an anthocyanidin. UDP-alpha-D-glucose-binding residues include D397 and Q398.

The protein belongs to the UDP-glycosyltransferase family.

The catalysed reaction is oleanolate + UDP-alpha-D-glucose = oleanolate 3-O-beta-D-glucoside + UDP + H(+). Its function is as follows. Catalyzes the transfer of a glucose (Glc) moiety from UDP-Glc to the C-3 position of the oleanane sapogenins oleanolate and hederagenin, and to the C-28 carboxylic group of the lupane sapogenin betulinate. The monoglucosylated hederagenin 3-O-beta-D-glucoside is a feeding deterrent of the yellow-striped flea beetle (Phyllotreta nemorum). The sequence is that of UDP-glycosyltransferase 73C11 from Barbarea vulgaris (Yellow rocket).